Reading from the N-terminus, the 64-residue chain is Alpha-toxin Ts5 (64 aa).

The 63-residue stretch at 2 to 64 (KDGYPVEGDN…KEPTKTSGRC (63 aa)) folds into the LCN-type CS-alpha/beta domain. Cystine bridges form between Cys-12-Cys-64, Cys-16-Cys-38, Cys-24-Cys-44, and Cys-28-Cys-46.

This sequence belongs to the long (4 C-C) scorpion toxin superfamily. Sodium channel inhibitor family. Alpha subfamily. In terms of tissue distribution, expressed by the venom gland.

Its subcellular location is the secreted. In terms of biological role, alpha toxins bind voltage-independently at site-3 of sodium channels (Nav) and inhibit the inactivation of the activated channels, thereby blocking neuronal transmission. By extending the depolarized period it indirectly affects beta-cell voltage-dependent potassium channels, thus increasing potassium permeability. In Tityus serrulatus (Brazilian scorpion), this protein is Alpha-toxin Ts5.